Here is a 184-residue protein sequence, read N- to C-terminus: Cytidylate kinase (184 aa).

8–16 (GQPGSGKTT) is an ATP binding site.

The protein belongs to the cytidylate kinase family. Type 2 subfamily.

It is found in the cytoplasm. It carries out the reaction CMP + ATP = CDP + ADP. It catalyses the reaction dCMP + ATP = dCDP + ADP. This Pyrobaculum aerophilum (strain ATCC 51768 / DSM 7523 / JCM 9630 / CIP 104966 / NBRC 100827 / IM2) protein is Cytidylate kinase.